The sequence spans 232 residues: Triosephosphate isomerase (232 aa).

Position 6–8 (6–8 (NFK)) interacts with substrate. Histidine 90 serves as the catalytic Electrophile. Glutamate 159 functions as the Proton acceptor in the catalytic mechanism. Residues glycine 165 and serine 195 each coordinate substrate.

Belongs to the triosephosphate isomerase family. As to quaternary structure, homodimer.

Its subcellular location is the cytoplasm. It catalyses the reaction D-glyceraldehyde 3-phosphate = dihydroxyacetone phosphate. It functions in the pathway carbohydrate biosynthesis; gluconeogenesis. The protein operates within carbohydrate degradation; glycolysis; D-glyceraldehyde 3-phosphate from glycerone phosphate: step 1/1. Its function is as follows. Involved in the gluconeogenesis. Catalyzes stereospecifically the conversion of dihydroxyacetone phosphate (DHAP) to D-glyceraldehyde-3-phosphate (G3P). The protein is Triosephosphate isomerase of Wolinella succinogenes (strain ATCC 29543 / DSM 1740 / CCUG 13145 / JCM 31913 / LMG 7466 / NCTC 11488 / FDC 602W) (Vibrio succinogenes).